A 275-amino-acid chain; its full sequence is NH(3)-dependent NAD(+) synthetase (275 aa).

50 to 57 (GISGGVDS) serves as a coordination point for ATP. A Mg(2+)-binding site is contributed by aspartate 56. Arginine 147 serves as a coordination point for deamido-NAD(+). Threonine 167 lines the ATP pocket. Glutamate 172 provides a ligand contact to Mg(2+). Deamido-NAD(+) contacts are provided by lysine 180 and aspartate 187. Positions 196 and 218 each coordinate ATP. A deamido-NAD(+)-binding site is contributed by 267–268 (HK).

The protein belongs to the NAD synthetase family. As to quaternary structure, homodimer.

It catalyses the reaction deamido-NAD(+) + NH4(+) + ATP = AMP + diphosphate + NAD(+) + H(+). It functions in the pathway cofactor biosynthesis; NAD(+) biosynthesis; NAD(+) from deamido-NAD(+) (ammonia route): step 1/1. Catalyzes the ATP-dependent amidation of deamido-NAD to form NAD. Uses ammonia as a nitrogen source. This is NH(3)-dependent NAD(+) synthetase from Pseudomonas fluorescens (strain Pf0-1).